The following is a 185-amino-acid chain: ATP synthase subunit b 1 (185 aa).

Residues threonine 4–tryptophan 24 form a helical membrane-spanning segment.

This sequence belongs to the ATPase B chain family. F-type ATPases have 2 components, F(1) - the catalytic core - and F(0) - the membrane proton channel. F(1) has five subunits: alpha(3), beta(3), gamma(1), delta(1), epsilon(1). F(0) has three main subunits: a(1), b(2) and c(10-14). The alpha and beta chains form an alternating ring which encloses part of the gamma chain. F(1) is attached to F(0) by a central stalk formed by the gamma and epsilon chains, while a peripheral stalk is formed by the delta and b chains.

The protein localises to the cell inner membrane. In terms of biological role, f(1)F(0) ATP synthase produces ATP from ADP in the presence of a proton or sodium gradient. F-type ATPases consist of two structural domains, F(1) containing the extramembraneous catalytic core and F(0) containing the membrane proton channel, linked together by a central stalk and a peripheral stalk. During catalysis, ATP synthesis in the catalytic domain of F(1) is coupled via a rotary mechanism of the central stalk subunits to proton translocation. Functionally, component of the F(0) channel, it forms part of the peripheral stalk, linking F(1) to F(0). This is ATP synthase subunit b 1 from Ruegeria sp. (strain TM1040) (Silicibacter sp.).